The chain runs to 466 residues: Ribulose bisphosphate carboxylase large chain (466 aa).

Residue lysine 5 is modified to N6,N6,N6-trimethyllysine. Positions 114 and 164 each coordinate substrate. Lysine 166 functions as the Proton acceptor in the catalytic mechanism. Lysine 168 contributes to the substrate binding site. Mg(2+) contacts are provided by lysine 192, aspartate 194, and glutamate 195. Lysine 192 carries the post-translational modification N6-carboxylysine. The active-site Proton acceptor is histidine 285. Positions 286, 318, and 370 each coordinate substrate.

The protein belongs to the RuBisCO large chain family. Type I subfamily. In terms of assembly, heterohexadecamer of 8 large chains and 8 small chains; disulfide-linked. The disulfide link is formed within the large subunit homodimers. Mg(2+) serves as cofactor. In terms of processing, the disulfide bond which can form in the large chain dimeric partners within the hexadecamer appears to be associated with oxidative stress and protein turnover.

The protein resides in the plastid. It localises to the chloroplast. It catalyses the reaction 2 (2R)-3-phosphoglycerate + 2 H(+) = D-ribulose 1,5-bisphosphate + CO2 + H2O. It carries out the reaction D-ribulose 1,5-bisphosphate + O2 = 2-phosphoglycolate + (2R)-3-phosphoglycerate + 2 H(+). RuBisCO catalyzes two reactions: the carboxylation of D-ribulose 1,5-bisphosphate, the primary event in carbon dioxide fixation, as well as the oxidative fragmentation of the pentose substrate in the photorespiration process. Both reactions occur simultaneously and in competition at the same active site. The polypeptide is Ribulose bisphosphate carboxylase large chain (Silene gallica (Common catchfly)).